A 720-amino-acid polypeptide reads, in one-letter code: Engulfment and cell motility protein 3 (720 aa).

Residues 307–479 (EQRDQLQALR…VVREQLARTL (173 aa)) form the ELMO domain. In terms of domain architecture, PH spans 542-664 (RLCEGMLFRK…TDGLSALLGS (123 aa)). An SH3-binding motif is present at residues 696 to 706 (PEQPPPVPPPP).

As to quaternary structure, probably interacts directly with the SH3-domain of DOCK1 via its SH3-binding site. Part of a complex with DOCK1 and RAC1. Interacts with ADGRB3.

It is found in the cytoplasm. In terms of biological role, involved in cytoskeletal rearrangements required for phagocytosis of apoptotic cells and cell motility. Acts in association with DOCK1 and CRK. Was initially proposed to be required in complex with DOCK1 to activate Rac Rho small GTPases. May enhance the guanine nucleotide exchange factor (GEF) activity of DOCK1. The polypeptide is Engulfment and cell motility protein 3 (Elmo3) (Mus musculus (Mouse)).